The chain runs to 168 residues: Phosphopantetheine adenylyltransferase (168 aa).

Substrate is bound at residue T9. Residues 9–10 and H17 each bind ATP; that span reads TF. Positions 41, 73, and 87 each coordinate substrate. ATP is bound by residues 88–90, E98, and 123–129; these read GLR and YQFISGT.

It belongs to the bacterial CoaD family. In terms of assembly, homohexamer. It depends on Mg(2+) as a cofactor.

The protein resides in the cytoplasm. The catalysed reaction is (R)-4'-phosphopantetheine + ATP + H(+) = 3'-dephospho-CoA + diphosphate. Its pathway is cofactor biosynthesis; coenzyme A biosynthesis; CoA from (R)-pantothenate: step 4/5. In terms of biological role, reversibly transfers an adenylyl group from ATP to 4'-phosphopantetheine, yielding dephospho-CoA (dPCoA) and pyrophosphate. The chain is Phosphopantetheine adenylyltransferase from Paraburkholderia phymatum (strain DSM 17167 / CIP 108236 / LMG 21445 / STM815) (Burkholderia phymatum).